The primary structure comprises 273 residues: Bidirectional sugar transporter SWEET1a (273 aa).

Residues M1–R6 are Extracellular-facing. The helical transmembrane segment at F7–T27 threads the bilayer. A MtN3/slv 1 domain is found at F7–K95. The Cytoplasmic segment spans residues F28 to G42. The chain crosses the membrane as a helical span at residues V43–V63. Residues S64–T71 lie on the Extracellular side of the membrane. A helical transmembrane segment spans residues T72–A92. At E93–M101 the chain is on the cytoplasmic side. Residues G102–L122 traverse the membrane as a helical segment. Topologically, residues H123 to K128 are extracellular. A helical membrane pass occupies residues L129 to I149. In terms of domain architecture, MtN3/slv 2 spans C131–K214. Topologically, residues M150–P163 are cytoplasmic. A helical transmembrane segment spans residues F164–G184. Residues R185–F188 lie on the Extracellular side of the membrane. Residues I189–I209 traverse the membrane as a helical segment. Over Y210–V273 the chain is Cytoplasmic.

It belongs to the SWEET sugar transporter family. In terms of assembly, forms homooligomers and/or heterooligomers.

It localises to the cell membrane. Mediates both low-affinity uptake and efflux of sugar across the plasma membrane. This chain is Bidirectional sugar transporter SWEET1a (SWEET1A), found in Oryza sativa subsp. japonica (Rice).